We begin with the raw amino-acid sequence, 70 residues long: Small ribosomal subunit protein bS21 (70 aa).

The protein belongs to the bacterial ribosomal protein bS21 family.

The protein is Small ribosomal subunit protein bS21 of Campylobacter curvus (strain 525.92).